Consider the following 374-residue polypeptide: Chaperone protein DnaJ (374 aa).

A J domain is found at 5-70; the sequence is DFYEILGVGK…QKRDAYDRYG (66 aa). Residues 29–50 are disordered; that stretch reads AMKHHPDRNPDSKGAEDKFKEA. Positions 35 to 50 are enriched in basic and acidic residues; it reads DRNPDSKGAEDKFKEA. A CR-type zinc finger spans residues 134–212; that stretch reads GYDTTIRVPS…CSGAGKIKRN (79 aa). Zn(2+) is bound by residues cysteine 147, cysteine 150, cysteine 164, cysteine 167, cysteine 186, cysteine 189, cysteine 200, and cysteine 203. CXXCXGXG motif repeat units follow at residues 147–154, 164–171, 186–193, and 200–207; these read CETCDGSG, CTTCGGHG, CPKCHGSG, and CGTCSGAG.

It belongs to the DnaJ family. As to quaternary structure, homodimer. The cofactor is Zn(2+).

The protein resides in the cytoplasm. In terms of biological role, participates actively in the response to hyperosmotic and heat shock by preventing the aggregation of stress-denatured proteins and by disaggregating proteins, also in an autonomous, DnaK-independent fashion. Unfolded proteins bind initially to DnaJ; upon interaction with the DnaJ-bound protein, DnaK hydrolyzes its bound ATP, resulting in the formation of a stable complex. GrpE releases ADP from DnaK; ATP binding to DnaK triggers the release of the substrate protein, thus completing the reaction cycle. Several rounds of ATP-dependent interactions between DnaJ, DnaK and GrpE are required for fully efficient folding. Also involved, together with DnaK and GrpE, in the DNA replication of plasmids through activation of initiation proteins. The chain is Chaperone protein DnaJ from Janthinobacterium sp. (strain Marseille) (Minibacterium massiliensis).